The primary structure comprises 305 residues: Aspartate carbamoyltransferase catalytic subunit (305 aa).

Carbamoyl phosphate contacts are provided by Arg51 and Thr52. Lys79 contributes to the L-aspartate binding site. 3 residues coordinate carbamoyl phosphate: Arg101, His129, and Gln132. 2 residues coordinate L-aspartate: Arg165 and Arg220. Residues Gly258 and Pro259 each coordinate carbamoyl phosphate.

The protein belongs to the aspartate/ornithine carbamoyltransferase superfamily. ATCase family. In terms of assembly, heterododecamer (2C3:3R2) of six catalytic PyrB chains organized as two trimers (C3), and six regulatory PyrI chains organized as three dimers (R2).

The catalysed reaction is carbamoyl phosphate + L-aspartate = N-carbamoyl-L-aspartate + phosphate + H(+). It functions in the pathway pyrimidine metabolism; UMP biosynthesis via de novo pathway; (S)-dihydroorotate from bicarbonate: step 2/3. Catalyzes the condensation of carbamoyl phosphate and aspartate to form carbamoyl aspartate and inorganic phosphate, the committed step in the de novo pyrimidine nucleotide biosynthesis pathway. This is Aspartate carbamoyltransferase catalytic subunit from Rubrobacter xylanophilus (strain DSM 9941 / JCM 11954 / NBRC 16129 / PRD-1).